A 118-amino-acid polypeptide reads, in one-letter code: MKVLLYIAASCLMLLALNVSAENTQQEEEDYDYGTDTCPFPVLANKTNKAKFVGCHQKCNGGDQKLTDGTACYVVERKVWDRMTPMLWYSCPLGECKNGVCEDLRKKEECRKGNGEEK.

The N-terminal stretch at 1-21 (MKVLLYIAASCLMLLALNVSA) is a signal peptide. Disulfide bonds link Cys38–Cys59, Cys55–Cys96, Cys72–Cys101, and Cys91–Cys110. The N-linked (GlcNAc...) asparagine glycan is linked to Asn45.

The protein resides in the secreted. Salivary chemokine-binding protein which binds to host chemokines CCL1, CCL3, CCL5 and CCL22. This chain is Evasin P546, found in Amblyomma cajennense (Cayenne tick).